Reading from the N-terminus, the 270-residue chain is Tryptophan synthase alpha chain (270 aa).

Residues E49 and D60 each act as proton acceptor in the active site.

This sequence belongs to the TrpA family. Tetramer of two alpha and two beta chains.

It catalyses the reaction (1S,2R)-1-C-(indol-3-yl)glycerol 3-phosphate + L-serine = D-glyceraldehyde 3-phosphate + L-tryptophan + H2O. It functions in the pathway amino-acid biosynthesis; L-tryptophan biosynthesis; L-tryptophan from chorismate: step 5/5. Functionally, the alpha subunit is responsible for the aldol cleavage of indoleglycerol phosphate to indole and glyceraldehyde 3-phosphate. This is Tryptophan synthase alpha chain from Gluconobacter oxydans (strain 621H) (Gluconobacter suboxydans).